Here is a 198-residue protein sequence, read N- to C-terminus: MLREVIYCGICSYPPEYCEFSGKLKRCKVWLSENHADLYAKLYGTDDNTQEVEAVTNKLAESSIGEAREEKLEKDLLKIQKKQENREQRELAKKLSSKVIIKREARTKRKFIVAISGLEVFDIDMKKLAKTFASRFATGCSVSKNAEKKEEVVIQGDVMDEVETYIHSLLEEKGLKDVKVETIDAKKKKKPAAEGAAK.

An SUI1 domain is found at 99–170 (VIIKREARTK…EVETYIHSLL (72 aa)).

This sequence belongs to the DENR family. Interacts with the 40S ribosomal subunit.

It is found in the cytoplasm. The sequence is that of Translation machinery-associated protein 22 (TMA22) from Saccharomyces cerevisiae (strain YJM789) (Baker's yeast).